The chain runs to 89 residues: Small ribosomal subunit protein uS15 (89 aa).

The protein belongs to the universal ribosomal protein uS15 family. As to quaternary structure, part of the 30S ribosomal subunit. Forms a bridge to the 50S subunit in the 70S ribosome, contacting the 23S rRNA.

In terms of biological role, one of the primary rRNA binding proteins, it binds directly to 16S rRNA where it helps nucleate assembly of the platform of the 30S subunit by binding and bridging several RNA helices of the 16S rRNA. Forms an intersubunit bridge (bridge B4) with the 23S rRNA of the 50S subunit in the ribosome. This chain is Small ribosomal subunit protein uS15, found in Xanthobacter autotrophicus (strain ATCC BAA-1158 / Py2).